A 143-amino-acid chain; its full sequence is Brain ribonuclease (143 aa).

Residues 1-21 are disordered; it reads KESAAAKFRRQHMDSGSSSSG. 2 residues coordinate substrate: K7 and R10. H12 functions as the Proton acceptor in the catalytic mechanism. Disulfide bonds link C26-C84, C40-C95, C58-C110, and C65-C72. 41-45 contributes to the substrate binding site; sequence KPVNT. N62 carries N-linked (GlcNAc...) asparagine glycosylation. Residues K66 and R85 each coordinate substrate. H119 functions as the Proton donor in the catalytic mechanism. O-linked (GalNAc...) threonine glycosylation occurs at T129. Residue S133 is glycosylated (O-linked (GalNAc...) serine).

It belongs to the pancreatic ribonuclease family.

It is found in the secreted. This is Brain ribonuclease (BRN) from Ovis aries (Sheep).